Reading from the N-terminus, the 457-residue chain is NADP-specific glutamate dehydrogenase (457 aa).

K113 is a catalytic residue.

It belongs to the Glu/Leu/Phe/Val dehydrogenases family. In terms of assembly, homohexamer.

It catalyses the reaction L-glutamate + NADP(+) + H2O = 2-oxoglutarate + NH4(+) + NADPH + H(+). This chain is NADP-specific glutamate dehydrogenase (GDH), found in Tuber borchii (White truffle).